Here is a 176-residue protein sequence, read N- to C-terminus: Disulfide bond formation protein B (176 aa).

The Cytoplasmic segment spans residues 1 to 14 (MLRFLNQCSQGRGA). The helical transmembrane segment at 15 to 31 (WLLMAFTALALELTALW) threads the bilayer. Topologically, residues 32–49 (FQHVMLLKPCVLCIYERC) are periplasmic. An intrachain disulfide couples C41 to C44. A helical transmembrane segment spans residues 50–65 (ALFGVLGAALIGAIAP). Residues 66-71 (KTPLRY) lie on the Cytoplasmic side of the membrane. The helical transmembrane segment at 72 to 89 (VAMVIWLYSAFRGVQLTY) threads the bilayer. Residues 90–144 (EHTMLQLYPSPFATCDFMVRFPEWLPLDKWVPQVFVASGDCAERQWDFLGLEMPQ) are Periplasmic-facing. Cysteines 104 and 130 form a disulfide. The chain crosses the membrane as a helical span at residues 145–163 (WLLGIFIAYLIVAVLVMIS). At 164–176 (QPFKAKKRDLFGR) the chain is on the cytoplasmic side.

It belongs to the DsbB family.

It localises to the cell inner membrane. Functionally, required for disulfide bond formation in some periplasmic proteins. Acts by oxidizing the DsbA protein. The sequence is that of Disulfide bond formation protein B from Shigella sonnei (strain Ss046).